Here is a 201-residue protein sequence, read N- to C-terminus: Proteinase inhibitor type-2 CEVI57 (201 aa).

The first 23 residues, 1 to 23 (MAVYKVSFLAHLLVLGMYLLVST), serve as a signal peptide directing secretion. 3 consecutive repeat copies span residues 27–83 (ANAC…DPKN), 84–143 (PNIC…IEPK), and 144–199 (GCTK…QSIS). 8 disulfide bridges follow: Cys30-Cys118, Cys34-Cys114, Cys42-Cys124, Cys54-Cys91, Cys57-Cys75, Cys58-Cys87, Cys64-Cys100, and Cys117-Cys135.

It belongs to the protease inhibitor I20 (potato type II proteinase inhibitor) family.

This is Proteinase inhibitor type-2 CEVI57 (CEVI57) from Solanum lycopersicum (Tomato).